Reading from the N-terminus, the 343-residue chain is D-alanine--D-alanine ligase (343 aa).

Residues 129–335 form the ATP-grasp domain; sequence KYVLEHFNIK…YSKLIDELIE (207 aa). 162 to 217 lines the ATP pocket; it reads ENKLGYAVFIKPSNSGSSVGITKAHNRKELEAGLEEAMKYDRKILVEEALNAREIE. Mg(2+) contacts are provided by Asp288, Glu302, and Asn304.

This sequence belongs to the D-alanine--D-alanine ligase family. It depends on Mg(2+) as a cofactor. The cofactor is Mn(2+).

It localises to the cytoplasm. It carries out the reaction 2 D-alanine + ATP = D-alanyl-D-alanine + ADP + phosphate + H(+). The protein operates within cell wall biogenesis; peptidoglycan biosynthesis. In terms of biological role, cell wall formation. The protein is D-alanine--D-alanine ligase of Clostridium acetobutylicum (strain ATCC 824 / DSM 792 / JCM 1419 / IAM 19013 / LMG 5710 / NBRC 13948 / NRRL B-527 / VKM B-1787 / 2291 / W).